The chain runs to 612 residues: uncharacterized protein (612 aa).

6 consecutive transmembrane segments (helical) span residues isoleucine 13 to proline 33, alanine 38 to alanine 58, threonine 67 to isoleucine 87, glycine 107 to leucine 127, leucine 144 to serine 164, and leucine 189 to leucine 209. RCK C-terminal domains lie at glycine 218–isoleucine 302 and asparagine 316–leucine 403. Transmembrane regions (helical) follow at residues alanine 419–valine 439, isoleucine 459–threonine 479, leucine 501–leucine 521, alanine 525–proline 545, leucine 546–tyrosine 566, and isoleucine 586–tyrosine 606.

The protein belongs to the SLC13A/DASS transporter (TC 2.A.47) family. NADC subfamily.

It localises to the cell membrane. This is an uncharacterized protein from Synechocystis sp. (strain ATCC 27184 / PCC 6803 / Kazusa).